The chain runs to 392 residues: Putative RNA-binding protein Luc7-like 2 (392 aa).

Phosphoserine is present on Ser-18. The stretch at 102 to 177 (EVSKKRLAET…EAEEVYRNSM (76 aa)) forms a coiled coil. Over residues 235–257 (KQEKRNQERLKRREEREREEREK) the composition is skewed to basic and acidic residues. Residues 235-392 (KQEKRNQERL…SSEEREAGEI (158 aa)) are disordered. Basic residues predominate over residues 258–321 (LRRSRSHSKN…RSRSHQRSRH (64 aa)). Lys-266 and Lys-269 each carry 5-hydroxylysine; by JMJD6. Basic and acidic residues-rich tracts occupy residues 337–364 (KERF…DRDR) and 377–392 (RSED…AGEI).

The protein belongs to the Luc7 family. Interacts with SCNM1. All isoforms are expressed in brain, kidney, heart, thymus, stomach, skeletal muscle, testis and spinal cord.

It localises to the nucleus speckle. Its subcellular location is the nucleus. It is found in the nucleoplasm. In terms of biological role, may bind to RNA via its Arg/Ser-rich domain. The chain is Putative RNA-binding protein Luc7-like 2 (Luc7l2) from Mus musculus (Mouse).